The chain runs to 626 residues: tRNA uridine 5-carboxymethylaminomethyl modification enzyme MnmG (626 aa).

13-18 (GGGHAG) contacts FAD. An NAD(+)-binding site is contributed by 273-287 (GPRYCPSIEDKIHRF).

Belongs to the MnmG family. Homodimer. Heterotetramer of two MnmE and two MnmG subunits. Requires FAD as cofactor.

It localises to the cytoplasm. NAD-binding protein involved in the addition of a carboxymethylaminomethyl (cmnm) group at the wobble position (U34) of certain tRNAs, forming tRNA-cmnm(5)s(2)U34. This chain is tRNA uridine 5-carboxymethylaminomethyl modification enzyme MnmG, found in Acinetobacter baumannii (strain AYE).